Consider the following 124-residue polypeptide: Large ribosomal subunit protein uL18 (124 aa).

The protein belongs to the universal ribosomal protein uL18 family. Part of the 50S ribosomal subunit; part of the 5S rRNA/L5/L18/L25 subcomplex. Contacts the 5S and 23S rRNAs.

In terms of biological role, this is one of the proteins that bind and probably mediate the attachment of the 5S RNA into the large ribosomal subunit, where it forms part of the central protuberance. The chain is Large ribosomal subunit protein uL18 from Orientia tsutsugamushi (strain Boryong) (Rickettsia tsutsugamushi).